The sequence spans 302 residues: Lactoylglutathione lyase (302 aa).

VOC domains follow at residues 11–153 (KLNH…LVSQ) and 166–301 (RFNH…VIEQ). His-14 serves as a coordination point for Zn(2+). A substrate-binding site is contributed by Arg-18. Glu-75 provides a ligand contact to Zn(2+). Substrate contacts are provided by Asn-79, Arg-99, and His-103. Zn(2+) is bound by residues His-103 and Glu-149. Glu-149 functions as the Proton donor/acceptor in the catalytic mechanism.

The protein belongs to the glyoxalase I family. As to quaternary structure, monomer. The cofactor is Zn(2+). It depends on Cu(2+) as a cofactor. Requires Ni(2+) as cofactor. Mn(2+) is required as a cofactor.

The catalysed reaction is (R)-S-lactoylglutathione = methylglyoxal + glutathione. It participates in secondary metabolite metabolism; methylglyoxal degradation; (R)-lactate from methylglyoxal: step 1/2. In terms of biological role, catalyzes the conversion of hemimercaptal, formed from methylglyoxal and glutathione, to S-lactoylglutathione. This is Lactoylglutathione lyase (glo1) from Schizosaccharomyces pombe (strain 972 / ATCC 24843) (Fission yeast).